The sequence spans 177 residues: Isopentenyl-diphosphate Delta-isomerase (177 aa).

The Mn(2+) site is built by His22 and His28. The Nudix hydrolase domain occupies 26–160; sequence LRHKAISVFV…PERFTPWLRI (135 aa). Cys62 is a catalytic residue. A Mn(2+)-binding site is contributed by His64. Mg(2+) is bound at residue Glu82. The Mn(2+) site is built by Glu108 and Glu110. Glu110 is an active-site residue.

Belongs to the IPP isomerase type 1 family. Requires Mg(2+) as cofactor. Mn(2+) is required as a cofactor.

The protein resides in the cytoplasm. The enzyme catalyses isopentenyl diphosphate = dimethylallyl diphosphate. It functions in the pathway isoprenoid biosynthesis; dimethylallyl diphosphate biosynthesis; dimethylallyl diphosphate from isopentenyl diphosphate: step 1/1. Its pathway is porphyrin-containing compound metabolism; chlorophyll biosynthesis. Functionally, catalyzes the 1,3-allylic rearrangement of the homoallylic substrate isopentenyl (IPP) to its highly electrophilic allylic isomer, dimethylallyl diphosphate (DMAPP). This Cereibacter sphaeroides (strain ATCC 17025 / ATH 2.4.3) (Rhodobacter sphaeroides) protein is Isopentenyl-diphosphate Delta-isomerase.